We begin with the raw amino-acid sequence, 2646 residues long: Probable helicase senataxin (2646 aa).

Ser-102 bears the Phosphoserine mark. Lys-339 participates in a covalent cross-link: Glycyl lysine isopeptide (Lys-Gly) (interchain with G-Cter in SUMO1). Ser-640 carries the post-translational modification Phosphoserine. Disordered regions lie at residues 705 to 734 and 825 to 876; these read KISA…WGCD and GGAL…DDED. Over residues 714–727 the composition is skewed to polar residues; the sequence is ESSSYAPSNSTSRN. The segment covering 867–876 has biased composition (acidic residues); sequence LDNSSSDDED. Phosphoserine occurs at positions 870, 871, 872, 938, 1002, and 1004. Residues 1001–1023 form a disordered region; the sequence is ISDSDEEEDEDEDERSSSEENIK. Acidic residues predominate over residues 1003–1014; that stretch reads DSDEEEDEDEDE. A Glycyl lysine isopeptide (Lys-Gly) (interchain with G-Cter in SUMO2) cross-link involves residue Lys-1051. A compositionally biased stretch (basic and acidic residues) spans 1122–1133; it reads RNKAEGVKEHAG. Positions 1122–1245 are disordered; it reads RNKAEGVKEH…DTRRGQSKSS (124 aa). Residues 1147-1156 are compositionally biased toward basic residues; sequence GVKKPKRKRY. Residues 1176–1189 are compositionally biased toward basic and acidic residues; that stretch reads LPDRRDLTESDLKS. Residues 1196–1211 show a composition bias toward polar residues; the sequence is TPSSSVERDSTILQKS. A compositionally biased stretch (basic residues) spans 1212–1222; sequence TKSRTHSKPVR. Ser-1318 bears the Phosphoserine mark. Glycyl lysine isopeptide (Lys-Gly) (interchain with G-Cter in SUMO2) cross-links involve residues Lys-1328, Lys-1329, and Lys-1398. Ser-1472 bears the Phosphoserine mark. Thr-1474 carries the phosphothreonine modification. Positions 1591 to 1627 are disordered; it reads LSKSLESTTLQQSALKNKSSGAQPNLKVTPPSSMGSQ. Residues 1595–1613 show a composition bias toward polar residues; the sequence is LESTTLQQSALKNKSSGAQ. Position 1939–1946 (1939–1946) interacts with ATP; that stretch reads GPPGTGKS. Positions 2046 to 2063 match the Bipartite nuclear localization signal motif; the sequence is KKDLPSHIQEMLRRKEIL. Residue Thr-2450 is modified to Phosphothreonine. 3 disordered regions span residues 2450-2472, 2486-2506, and 2569-2624; these read THPP…NRLD, HTPS…QDRL, and SHRS…THHV. Composition is skewed to basic and acidic residues over residues 2496–2506 and 2593–2608; these read GPERPLLQDRL and KYSD…REPR. The necessary for nuclear localization stretch occupies residues 2632-2646; that stretch reads RRRLDDSSAKRRQFL.

Belongs to the DNA2/NAM7 helicase family. Homodimer. Interacts with PER2; the interaction inhibits termination of circadian target genes. Interacts with CHD4, POLR2A, PRKDC and TRIM28. Interacts with UBE2I. Interacts (via N-terminus domain) with EXOSC9 (via C-terminus region); the interaction enhances SETX sumoylation. Interacts with NCL (via N-terminus domain). Interacts with PABPN1, PABPC1 and SF3B1. Interacts with SMN1/SMN2 and POLR2A; SMN1/SMN2 recruits SETX to POLR2A. In terms of processing, ubiquitinated. Post-translationally, sumoylated preferentially with SUMO2 or SUMO3. In terms of tissue distribution, expressed in cerebellum, hippocampus, olfactory bulb, Bergmann glial fibers, stellate cells and Purkinje cells. Expressed in the epithelial cells of the lens but not in mature lens fiber cells. Expressed in the retina (highly expressed in inner and outer segments of photoreceptors and outer plexiform layer cells but weakly expressed in the inner plexiform and ganglion cell layers). Expressed in the kidney.

Its subcellular location is the nucleus. The protein resides in the nucleoplasm. It is found in the nucleolus. It localises to the cytoplasm. The protein localises to the chromosome. Its subcellular location is the telomere. The protein resides in the cell projection. It is found in the axon. It localises to the growth cone. Its function is as follows. Probable RNA/DNA helicase involved in diverse aspects of RNA metabolism and genomic integrity. Plays a role in transcription regulation by its ability to modulate RNA Polymerase II (Pol II) binding to chromatin and through its interaction with proteins involved in transcription. Contributes to the mRNA splicing efficiency and splice site selection. Required for the resolution of R-loop RNA-DNA hybrid formation at G-rich pause sites located downstream of the poly(A) site, allowing XRN2 recruitment and XRN2-mediated degradation of the downstream cleaved RNA and hence efficient RNA polymerase II (RNAp II) transcription termination. Required for the 3' transcriptional termination of PER1 and CRY2, thus playing an important role in the circadian rhythm regulation. Involved in DNA double-strand breaks damage response generated by oxidative stress. In association with RRP45, targets the RNA exosome complex to sites of transcription-induced DNA damage. Plays a role in the development and maturation of germ cells: essential for male meiosis, acting at the interface of transcription and meiotic recombination, and in the process of gene silencing during meiotic sex chromosome inactivation (MSCI). Plays a role in neurite outgrowth in hippocampal cells through FGF8-activated signaling pathways. Inhibits retinoic acid-induced apoptosis. May be involved in telomeric stability through the regulation of telomere repeat-containing RNA (TERRA) transcription. This Mus musculus (Mouse) protein is Probable helicase senataxin.